A 289-amino-acid polypeptide reads, in one-letter code: Phosphatidylserine decarboxylase proenzyme (289 aa).

Residues aspartate 89, histidine 146, and serine 252 each act as charge relay system; for autoendoproteolytic cleavage activity in the active site. Serine 252 serves as the catalytic Schiff-base intermediate with substrate; via pyruvic acid; for decarboxylase activity. Pyruvic acid (Ser); by autocatalysis is present on serine 252.

Belongs to the phosphatidylserine decarboxylase family. PSD-B subfamily. Prokaryotic type I sub-subfamily. In terms of assembly, heterodimer of a large membrane-associated beta subunit and a small pyruvoyl-containing alpha subunit. Pyruvate serves as cofactor. Post-translationally, is synthesized initially as an inactive proenzyme. Formation of the active enzyme involves a self-maturation process in which the active site pyruvoyl group is generated from an internal serine residue via an autocatalytic post-translational modification. Two non-identical subunits are generated from the proenzyme in this reaction, and the pyruvate is formed at the N-terminus of the alpha chain, which is derived from the carboxyl end of the proenzyme. The autoendoproteolytic cleavage occurs by a canonical serine protease mechanism, in which the side chain hydroxyl group of the serine supplies its oxygen atom to form the C-terminus of the beta chain, while the remainder of the serine residue undergoes an oxidative deamination to produce ammonia and the pyruvoyl prosthetic group on the alpha chain. During this reaction, the Ser that is part of the protease active site of the proenzyme becomes the pyruvoyl prosthetic group, which constitutes an essential element of the active site of the mature decarboxylase.

The protein resides in the cell membrane. It carries out the reaction a 1,2-diacyl-sn-glycero-3-phospho-L-serine + H(+) = a 1,2-diacyl-sn-glycero-3-phosphoethanolamine + CO2. The protein operates within phospholipid metabolism; phosphatidylethanolamine biosynthesis; phosphatidylethanolamine from CDP-diacylglycerol: step 2/2. Its function is as follows. Catalyzes the formation of phosphatidylethanolamine (PtdEtn) from phosphatidylserine (PtdSer). This is Phosphatidylserine decarboxylase proenzyme from Shewanella putrefaciens (strain CN-32 / ATCC BAA-453).